Reading from the N-terminus, the 176-residue chain is Translation initiation factor IF-3 (176 aa).

It belongs to the IF-3 family. As to quaternary structure, monomer.

The protein resides in the cytoplasm. Its function is as follows. IF-3 binds to the 30S ribosomal subunit and shifts the equilibrium between 70S ribosomes and their 50S and 30S subunits in favor of the free subunits, thus enhancing the availability of 30S subunits on which protein synthesis initiation begins. The protein is Translation initiation factor IF-3 of Wolinella succinogenes (strain ATCC 29543 / DSM 1740 / CCUG 13145 / JCM 31913 / LMG 7466 / NCTC 11488 / FDC 602W) (Vibrio succinogenes).